The chain runs to 444 residues: Glutamyl-tRNA(Gln) amidotransferase subunit D (444 aa).

An Asparaginase/glutaminase domain is found at 92–424 (SEIKIISTGG…EKIQNLMITN (333 aa)). Residues Thr102, Thr178, Asp179, and Lys257 contribute to the active site.

Belongs to the asparaginase 1 family. GatD subfamily. As to quaternary structure, heterodimer of GatD and GatE.

It carries out the reaction L-glutamyl-tRNA(Gln) + L-glutamine + ATP + H2O = L-glutaminyl-tRNA(Gln) + L-glutamate + ADP + phosphate + H(+). Functionally, allows the formation of correctly charged Gln-tRNA(Gln) through the transamidation of misacylated Glu-tRNA(Gln) in organisms which lack glutaminyl-tRNA synthetase. The reaction takes place in the presence of glutamine and ATP through an activated gamma-phospho-Glu-tRNA(Gln). The GatDE system is specific for glutamate and does not act on aspartate. The sequence is that of Glutamyl-tRNA(Gln) amidotransferase subunit D from Saccharolobus solfataricus (strain ATCC 35092 / DSM 1617 / JCM 11322 / P2) (Sulfolobus solfataricus).